Consider the following 400-residue polypeptide: Putative zinc-binding protein ORF78 (400 aa).

Residues 9 to 33 (LPRKRRAVAQPRTRQPPPKVHREDT) form a disordered region.

This is Putative zinc-binding protein ORF78 (ORF78) from Ictalurid herpesvirus 1 (strain Auburn) (IcHV-1).